Consider the following 740-residue polypeptide: Autotransporter adhesin BtaE (740 aa).

A signal peptide spans 1 to 11 (MFGLSVNHAYA). The interval 12–647 (GPGIFINDGT…LQTLDQANAY (636 aa)) is surface exposed passenger domain. Residues 648–686 (TDKKFGKLNEDIVATRIEARQAAAIGLAAASLRYDDRPG) are outer membrane translocation of the passenger domain. Beta stranded transmembrane passes span 686 to 696 (GKISAAIGGGF), 700 to 710 (EGAVALGLGHT), 719 to 725 (NLSAATS), and 728 to 739 (NWGMGAGFSYTF). The tract at residues 687-740 (KISAAIGGGFWRGEGAVALGLGHTSEDQRMRSNLSAATSGGNWGMGAGFSYTFN) is translocator domain.

Belongs to the autotransporter-2 (AT-2) (TC 1.B.40) family. In terms of assembly, homotrimer.

It localises to the cell surface. The protein resides in the cell outer membrane. Its function is as follows. Binds to hyaluronic acid and epithelial cells, and is required for full virulence in the mouse model. This is Autotransporter adhesin BtaE from Brucella suis biovar 1 (strain 1330).